Consider the following 84-residue polypeptide: MAKSNKRRPAPEKPVKTRKCVFCSKKGQTIDYKDTALLRTYISERGKIRARRVTGNCVQHQRDIAVAVKNAREVALLPFGSSTR.

Belongs to the bacterial ribosomal protein bS18 family. Part of the 30S ribosomal subunit. Forms a tight heterodimer with protein bS6.

In terms of biological role, binds as a heterodimer with protein bS6 to the central domain of the 16S rRNA, where it helps stabilize the platform of the 30S subunit. The polypeptide is Small ribosomal subunit protein bS18B (Mycolicibacterium smegmatis (strain ATCC 700084 / mc(2)155) (Mycobacterium smegmatis)).